The primary structure comprises 150 residues: Small ribosomal subunit protein uS7c (150 aa).

Belongs to the universal ribosomal protein uS7 family. As to quaternary structure, part of the 30S ribosomal subunit.

It localises to the plastid. It is found in the chloroplast. In terms of biological role, one of the primary rRNA binding proteins, it binds directly to 16S rRNA where it nucleates assembly of the head domain of the 30S subunit. This is Small ribosomal subunit protein uS7c (rps7) from Huperzia lucidula (Shining clubmoss).